A 179-amino-acid chain; its full sequence is Large ribosomal subunit protein uL5 (179 aa).

It belongs to the universal ribosomal protein uL5 family. Part of the 50S ribosomal subunit; part of the 5S rRNA/L5/L18/L25 subcomplex. Contacts the 5S rRNA and the P site tRNA. Forms a bridge to the 30S subunit in the 70S ribosome.

This is one of the proteins that bind and probably mediate the attachment of the 5S RNA into the large ribosomal subunit, where it forms part of the central protuberance. In the 70S ribosome it contacts protein S13 of the 30S subunit (bridge B1b), connecting the 2 subunits; this bridge is implicated in subunit movement. Contacts the P site tRNA; the 5S rRNA and some of its associated proteins might help stabilize positioning of ribosome-bound tRNAs. In Aliivibrio salmonicida (strain LFI1238) (Vibrio salmonicida (strain LFI1238)), this protein is Large ribosomal subunit protein uL5.